We begin with the raw amino-acid sequence, 736 residues long: Neprilysin-2 (736 aa).

Residues 1-19 (MRPDEEDGTTKSPGSRWTR) are Cytoplasmic-facing. A helical; Signal-anchor for type II membrane protein membrane pass occupies residues 20 to 40 (IWAIIALILLILFLLVLGAAI). The Extracellular portion of the chain corresponds to 41–736 (YFYINYKDSS…MNPREKCRVW (696 aa)). The region spanning 52 to 736 (VCLSPGCIKT…MNPREKCRVW (685 aa)) is the Peptidase M13 domain. 5 cysteine pairs are disulfide-bonded: cysteine 53/cysteine 58, cysteine 76/cysteine 721, cysteine 84/cysteine 681, cysteine 142/cysteine 399, and cysteine 608/cysteine 733. Residues 103–123 (FENLGQDLEFALKELLDENDE) adopt a coiled-coil conformation. Residue histidine 571 participates in Zn(2+) binding. The active site involves glutamate 572. Histidine 575 and glutamate 633 together coordinate Zn(2+). The active-site Proton donor is the aspartate 637.

The protein belongs to the peptidase M13 family. Zn(2+) serves as cofactor. Expressed in muscle cells, GLR cells, SMB motor neurons and AIM interneurons.

It localises to the membrane. Functionally, required for olfactory plasticity, which is the change from positive chemotaxis to dispersal after prolonged exposure to an odorant. Thought to antagonise snet-1 by degrading excess snet-1 peptides and thus enabling olfactory plasticity. The protein is Neprilysin-2 of Caenorhabditis elegans.